Reading from the N-terminus, the 101-residue chain is Cell division suppressor protein YneA (101 aa).

The 52-residue stretch at 35–86 folds into the LysM domain; that stretch reads MTVTVASGDTLWGLAKQYEPAHGLSPDEFIRWVVDVNRLPSSRLTAGEQIVI.

Belongs to the YneA family.

The protein resides in the cytoplasm. Its function is as follows. Inhibits cell division during the SOS response. Affects a later stage of the cell division protein assembly, after the assembly of the Z ring, by probably suppressing recruitment of FtsL and/or DivIC to the division machinery. The polypeptide is Cell division suppressor protein YneA (Geobacillus thermodenitrificans (strain NG80-2)).